Here is a 228-residue protein sequence, read N- to C-terminus: Urease accessory protein UreE (228 aa).

The tract at residues 188 to 228 is disordered; the sequence is PLDEPHGSGLHIHAIHSHGDGHSHDHDHSHSHGDHDHDHKH. Basic and acidic residues predominate over residues 204 to 228; it reads SHGDGHSHDHDHSHSHGDHDHDHKH.

Belongs to the UreE family.

It localises to the cytoplasm. Its function is as follows. Involved in urease metallocenter assembly. Binds nickel. Probably functions as a nickel donor during metallocenter assembly. The protein is Urease accessory protein UreE of Yersinia kristensenii.